A 217-amino-acid polypeptide reads, in one-letter code: GTPase IMAP family member GIMD1 (217 aa).

Positions 6–217 constitute an AIG1-type G domain; sequence KMIINLALFG…ENCYQVLTFK (212 aa). GTP contacts are provided by residues 15–23, Ser36, and 148–150; these read GMTQSGKSS and HAE.

This sequence belongs to the TRAFAC class TrmE-Era-EngA-EngB-Septin-like GTPase superfamily. AIG1/Toc34/Toc159-like paraseptin GTPase family. IAN subfamily.

The sequence is that of GTPase IMAP family member GIMD1 (GIMD1) from Homo sapiens (Human).